The chain runs to 220 residues: VQ motif-containing protein 5 (220 aa).

A VQ motif is present at residues Phe-49–Thr-57. 2 disordered regions span residues Pro-61–Ile-80 and His-131–Ser-171. Composition is skewed to polar residues over residues Met-133–Gly-150 and Ser-157–Ser-171.

The protein resides in the nucleus. May function as negative regulator of plant defense. The protein is VQ motif-containing protein 5 of Arabidopsis thaliana (Mouse-ear cress).